The primary structure comprises 308 residues: Mycothiol acetyltransferase (308 aa).

Glutamate 44 lines the 1D-myo-inositol 2-(L-cysteinylamino)-2-deoxy-alpha-D-glucopyranoside pocket. 83 to 85 (AVV) contacts acetyl-CoA. In terms of domain architecture, N-acetyltransferase spans 161-308 (VRLRTYAGSA…DVAYGRPEGD (148 aa)). Positions 188, 230, and 238 each coordinate 1D-myo-inositol 2-(L-cysteinylamino)-2-deoxy-alpha-D-glucopyranoside. Residues 242–244 (VGV) and 249–255 (QGRGLGR) each bind acetyl-CoA. 1D-myo-inositol 2-(L-cysteinylamino)-2-deoxy-alpha-D-glucopyranoside is bound at residue tyrosine 276. Residue 281–286 (NTAALH) coordinates acetyl-CoA.

This sequence belongs to the acetyltransferase family. MshD subfamily. Monomer.

It catalyses the reaction 1D-myo-inositol 2-(L-cysteinylamino)-2-deoxy-alpha-D-glucopyranoside + acetyl-CoA = mycothiol + CoA + H(+). In terms of biological role, catalyzes the transfer of acetyl from acetyl-CoA to desacetylmycothiol (Cys-GlcN-Ins) to form mycothiol. The protein is Mycothiol acetyltransferase of Gordonia bronchialis (strain ATCC 25592 / DSM 43247 / BCRC 13721 / JCM 3198 / KCTC 3076 / NBRC 16047 / NCTC 10667) (Rhodococcus bronchialis).